Reading from the N-terminus, the 1148-residue chain is Putative ATP-dependent RNA helicase rha-2 (1148 aa).

The segment covering 1 to 10 (MGKRKTKEDN) has biased composition (basic and acidic residues). Disordered regions lie at residues 1–51 (MGKR…FAKE) and 101–163 (STKL…DAGN). Residues 138-160 (PTDDESSSEEEEEEEEGDNDIED) show a composition bias toward acidic residues. The Helicase ATP-binding domain maps to 246–412 (VEAINENLVT…KLFPLLTPKV (167 aa)). Position 259–266 (259–266 (GETGSGKT)) interacts with ATP. The DEAH box signature appears at 355–358 (DEAH). The region spanning 463–703 (EVKQLITKLK…QLVLHLKSMN (241 aa)) is the Helicase C-terminal domain.

The protein belongs to the DEAD box helicase family. DEAH subfamily.

The catalysed reaction is ATP + H2O = ADP + phosphate + H(+). In terms of biological role, probable ATP-binding RNA helicase. The chain is Putative ATP-dependent RNA helicase rha-2 (rha-2) from Caenorhabditis elegans.